Here is a 468-residue protein sequence, read N- to C-terminus: Protein DML1 (468 aa).

This sequence belongs to the misato family.

It localises to the mitochondrion. Functionally, involved in the partitioning of the mitochondrial organelle and mitochondrial DNA (mtDNA) inheritance. This Kluyveromyces lactis (strain ATCC 8585 / CBS 2359 / DSM 70799 / NBRC 1267 / NRRL Y-1140 / WM37) (Yeast) protein is Protein DML1 (DML1).